A 1062-amino-acid polypeptide reads, in one-letter code: Cell division control protein 7 (1062 aa).

The 251-residue stretch at I9–V259 folds into the Protein kinase domain. ATP-binding positions include L15 to V23 and K38. The active-site Proton acceptor is the D131. 2 stretches are compositionally biased toward polar residues: residues N296 to Y310 and A376 to S394. 3 disordered regions span residues N296 to N331, N361 to S394, and N1038 to Q1062.

It belongs to the protein kinase superfamily. Ser/Thr protein kinase family. CDC7 subfamily. As to quaternary structure, interacts with spg1. Seems to interact with cdc11. Mg(2+) serves as cofactor.

It carries out the reaction L-seryl-[protein] + ATP = O-phospho-L-seryl-[protein] + ADP + H(+). It catalyses the reaction L-threonyl-[protein] + ATP = O-phospho-L-threonyl-[protein] + ADP + H(+). Functionally, protein kinase essential for cell division. Plays a key role in initiation of septum formation and cytokinesis. The polypeptide is Cell division control protein 7 (cdc7) (Schizosaccharomyces pombe (strain 972 / ATCC 24843) (Fission yeast)).